We begin with the raw amino-acid sequence, 238 residues long: MTYLAPALARIHPDWEAVLDQAAVAARLAEIDRLLVLQQQDGKTLFPPPPQVFNALAFAAPADVKVVILGQDPYHGDGEAMGLSFSVPDGARVPPSLRNIYKELAADLGLGVPASGDLTHWAQQGVLLLNSVLTVERDKAGSHGKLGWQTVSDALIDAVNRDNPGCVFLLWGNWAQTKAERIDASRHLVLTAAHPSPLSASRGFHGCRHFSQVNAWLIARGRQPVRWATAPAAQSCLF.

Asp72 (proton acceptor) is an active-site residue.

It belongs to the uracil-DNA glycosylase (UDG) superfamily. UNG family.

Its subcellular location is the cytoplasm. The enzyme catalyses Hydrolyzes single-stranded DNA or mismatched double-stranded DNA and polynucleotides, releasing free uracil.. In terms of biological role, excises uracil residues from the DNA which can arise as a result of misincorporation of dUMP residues by DNA polymerase or due to deamination of cytosine. This chain is Uracil-DNA glycosylase, found in Chromobacterium violaceum (strain ATCC 12472 / DSM 30191 / JCM 1249 / CCUG 213 / NBRC 12614 / NCIMB 9131 / NCTC 9757 / MK).